Reading from the N-terminus, the 514-residue chain is Cardiolipin synthase 2 (514 aa).

Helical transmembrane passes span 7–27, 41–61, and 71–91; these read LIFF…FIDV, ILGI…CVIF, and LTWL…YLLF. PLD phosphodiesterase domains follow at residues 249 to 276 and 427 to 454; these read INYR…GDEY and EKGF…DMRS. Active-site residues include His254, Lys256, Asp261, His432, Lys434, and Asp439.

It belongs to the phospholipase D family. Cardiolipin synthase subfamily.

Its subcellular location is the cell membrane. It carries out the reaction 2 a 1,2-diacyl-sn-glycero-3-phospho-(1'-sn-glycerol) = a cardiolipin + glycerol. Its function is as follows. Catalyzes the reversible phosphatidyl group transfer from one phosphatidylglycerol molecule to another to form cardiolipin (CL) (diphosphatidylglycerol) and glycerol. The sequence is that of Cardiolipin synthase 2 (cls2) from Bacillus cereus (strain ATCC 14579 / DSM 31 / CCUG 7414 / JCM 2152 / NBRC 15305 / NCIMB 9373 / NCTC 2599 / NRRL B-3711).